The sequence spans 1364 residues: ABC-type transporter cns4 (1364 aa).

One can recognise an ABC transporter 1 domain in the interval 42 to 290; that stretch reads SRVKESRAKP…MEEMGFLYTD (249 aa). N-linked (GlcNAc...) asparagine glycosylation is found at N152 and N214. Helical transmembrane passes span 435–455, 483–503, 508–528, 540–560, and 567–587; these read LFFAVLLNALLSMSEVTGSFA, IPLIAMQVTLFALPVYWMTGL, EAFLTYWIITISVTMCMTALF, AAIKVTGFLMSALIMYTGFLI, and PWLGWIFWINPLAYGYEAVLS. An N-linked (GlcNAc...) asparagine glycan is attached at N610. The helical transmembrane segment at 650 to 670 threads the bilayer; sequence FAIVWVWWALFVILTVYFTSN. N-linked (GlcNAc...) asparagine glycans are attached at residues N689, N711, and N739. The segment at 697–732 is disordered; that stretch reads DEEVGSGPDSHDSRNRSGISPIGDKQETSTDGPSKI. The ABC transporter 2 domain occupies 737–985; it reads IRNTSVFTWK…TVNEYFGRNG (249 aa). Residue 779-786 participates in ATP binding; the sequence is GSSGAGKT. 6 consecutive transmembrane segments (helical) span residues 1076 to 1094, 1105 to 1125, 1146 to 1166, 1185 to 1205, 1211 to 1231, and 1245 to 1265; these read LMLHITSGLLNGFSFWKIG, FTIFNFIFVAPGVIAQLQPLF, AFATGLIVSELPYLVVCAVVY, AVFFVVLMYEFIYTGIGQAIA, AIFAVLINPLIIAILVFFCGV, and WLYYLDPFNYLMGSLLIFTTF.

The protein belongs to the ABC transporter superfamily. ABCG family. PDR (TC 3.A.1.205) subfamily.

It localises to the cell membrane. Its function is as follows. ABC-type transporter; part of the gene cluster that mediates the biosynthesis of cordycepin (COR) and pentostatin (PTN), two adenosine analogs with related bioactivity profiles as both mimic adenosine and can inhibit some of the processes that are adenosine dependent. Mediates the pumping of pentostatin but not of cordycepin out of fungal cells. Decreasing intracellular pentostatin releases adenosine deaminase (ADA) inhibition, allowing ADA to deaminate cordycepin into non-toxic 3'-d. The protein is ABC-type transporter cns4 of Cordyceps militaris (strain CM01) (Caterpillar fungus).